A 384-amino-acid polypeptide reads, in one-letter code: uncharacterized protein (384 aa).

The next 12 helical transmembrane spans lie at 22 to 42 (LAFF…PFAK), 52 to 72 (LGLL…LTGV), 81 to 101 (AVIL…VLMN), 106 to 126 (MAIA…AMNI), 143 to 163 (FHGL…ALLW), 164 to 184 (LGLN…ILLL), 202 to 222 (LFVF…VMFL), 240 to 260 (GMSP…MTLG), 276 to 296 (VLLG…SIDS), 299 to 319 (AAII…PILF), 327 to 347 (VMPA…GILA), and 352 to 372 (IGFI…ALLL).

This sequence belongs to the major facilitator superfamily.

Its subcellular location is the membrane. This is an uncharacterized protein from Yersinia pestis.